The chain runs to 97 residues: YcgL domain-containing protein Maqu_1609 (97 aa).

The YcgL domain occupies E5–K89.

The protein is YcgL domain-containing protein Maqu_1609 of Marinobacter nauticus (strain ATCC 700491 / DSM 11845 / VT8) (Marinobacter aquaeolei).